We begin with the raw amino-acid sequence, 594 residues long: Glutamate decarboxylase 1 (594 aa).

A compositionally biased stretch (low complexity) spans 1–13 (MASSTPSSSATSS). The segment at 1–23 (MASSTPSSSATSSNAGADPNTTN) is disordered. S78 carries the post-translational modification Phosphoserine. 190–192 (QLS) provides a ligand contact to 4-aminobutanoate. Position 405 is an N6-(pyridoxal phosphate)lysine (K405). Residue R567 participates in 4-aminobutanoate binding.

This sequence belongs to the group II decarboxylase family. In terms of assembly, homodimer. Requires pyridoxal 5'-phosphate as cofactor.

It catalyses the reaction L-glutamate + H(+) = 4-aminobutanoate + CO2. Functionally, catalyzes the synthesis of the inhibitory neurotransmitter gamma-aminobutyric acid (GABA) with pyridoxal 5'-phosphate as cofactor. The polypeptide is Glutamate decarboxylase 1 (GAD1) (Pongo abelii (Sumatran orangutan)).